A 336-amino-acid chain; its full sequence is Protein RecA (336 aa).

ATP is bound at residue 66–73; sequence GNESSGKT.

This sequence belongs to the RecA family.

It is found in the cytoplasm. Functionally, can catalyze the hydrolysis of ATP in the presence of single-stranded DNA, the ATP-dependent uptake of single-stranded DNA by duplex DNA, and the ATP-dependent hybridization of homologous single-stranded DNAs. It interacts with LexA causing its activation and leading to its autocatalytic cleavage. The chain is Protein RecA from Mycoplasma pneumoniae (strain ATCC 29342 / M129 / Subtype 1) (Mycoplasmoides pneumoniae).